The primary structure comprises 61 residues: Conotoxin TxMRCL-04 (61 aa).

The first 22 residues, 1-22, serve as a signal peptide directing secretion; sequence MRCLPVFVILLLLIASTPSVDA. The propeptide occupies 23-46; sequence QLKTKDDMSLASFHDNVKRILQIR.

Belongs to the conotoxin T superfamily. In terms of processing, contains 2 disulfide bonds that can be either 'C1-C3, C2-C4' or 'C1-C4, C2-C3', since these disulfide connectivities have been observed for conotoxins with cysteine framework V (for examples, see AC P0DQQ7 and AC P81755). In terms of tissue distribution, expressed by the venom duct.

It localises to the secreted. The sequence is that of Conotoxin TxMRCL-04 from Conus textile (Cloth-of-gold cone).